The sequence spans 315 residues: Probable branched-chain amino acid transport permease protein LivH (315 aa).

9 helical membrane-spanning segments follow: residues 14 to 34, 49 to 69, 70 to 90, 100 to 120, 150 to 170, 201 to 221, 224 to 244, 250 to 270, and 283 to 303; these read ILEGAIIYSNLLVLLALGLTL, YAIVGSYVALTLLKLFGICPY, LSLPVLFVVGAIVGLITYLAL, VEILMIATLAIDLILLGVIGA, GILFVSTFVVILLLIGLYLLL, LFSWILSGALAGVAGGLLPFM, IVPATGDLIIISIFAASIVGG, GALIGGYIIGISESLITYYLA, and VISLIIMIATLLIAPYGITGV.

Belongs to the binding-protein-dependent transport system permease family. LivHM subfamily.

The protein resides in the cell membrane. Its function is as follows. Part of the binding-protein-dependent transport system for branched-chain amino acids. Probably responsible for the translocation of the substrates across the membrane. In Methanocaldococcus jannaschii (strain ATCC 43067 / DSM 2661 / JAL-1 / JCM 10045 / NBRC 100440) (Methanococcus jannaschii), this protein is Probable branched-chain amino acid transport permease protein LivH (livH).